Reading from the N-terminus, the 77-residue chain is MKEQKLIHEGLITESLPNGMFRVRLDNEDLILGYVSGRIRRSFIRILPGDRVKIEVSSYDSTRGRIIYRLRNKDSND.

The S1-like domain maps to 1–71; the sequence is MKEQKLIHEG…TRGRIIYRLR (71 aa).

Belongs to the IF-1 family. Component of the 30S ribosomal translation pre-initiation complex which assembles on the 30S ribosome in the order IF-2 and IF-3, IF-1 and N-formylmethionyl-tRNA(fMet); mRNA recruitment can occur at any time during PIC assembly.

The protein resides in the plastid. It localises to the chloroplast. Its function is as follows. One of the essential components for the initiation of protein synthesis. Stabilizes the binding of IF-2 and IF-3 on the 30S subunit to which N-formylmethionyl-tRNA(fMet) subsequently binds. Helps modulate mRNA selection, yielding the 30S pre-initiation complex (PIC). Upon addition of the 50S ribosomal subunit IF-1, IF-2 and IF-3 are released leaving the mature 70S translation initiation complex. The sequence is that of Translation initiation factor IF-1, chloroplastic from Calycanthus floridus var. glaucus (Eastern sweetshrub).